We begin with the raw amino-acid sequence, 234 residues long: DEAD-box ATP-dependent RNA helicase 3 (234 aa).

The Q motif motif lies at 120–148 (LAVSRLGLPQKLVETLEKRGITKLFPIQR). The Helicase ATP-binding domain occupies 151–234 (LVPALEGRDI…RTVCVYGGVS (84 aa)). ATP is bound at residue 164 to 171 (AKTGTGKT).

Belongs to the DEAD box helicase family. DDX21/DDX50 subfamily.

This chain is DEAD-box ATP-dependent RNA helicase 3, found in Helianthus annuus (Common sunflower).